Reading from the N-terminus, the 166-residue chain is MTETTEALENPDNPEAETAAAEVTEAPVEAVPAESYVFERPIQTVGRRKEAVVRVRLVPGTGKFNLNGRTLEGYFPNKVHQQLVKAPLVTVDRVDGFDIYAHLHGGGPSGQAGALRLGIARALILASPDDRPALKKAGFLTRDPRATERKKYGLKKARKAPQYSKR.

The disordered stretch occupies residues 135 to 166; it reads KKAGFLTRDPRATERKKYGLKKARKAPQYSKR. Residues 142–151 are compositionally biased toward basic and acidic residues; it reads RDPRATERKK. Residues 152-166 show a composition bias toward basic residues; sequence YGLKKARKAPQYSKR.

It belongs to the universal ribosomal protein uS9 family.

This is Small ribosomal subunit protein uS9 from Mycolicibacterium paratuberculosis (strain ATCC BAA-968 / K-10) (Mycobacterium paratuberculosis).